Here is a 52-residue protein sequence, read N- to C-terminus: Insulin (52 aa).

3 disulfide bridges follow: Cys7–Cys38, Cys19–Cys51, and Cys37–Cys42.

It belongs to the insulin family. In terms of assembly, heterodimer of a B chain and an A chain linked by two disulfide bonds.

It is found in the secreted. Functionally, insulin decreases blood glucose concentration. It increases cell permeability to monosaccharides, amino acids and fatty acids. It accelerates glycolysis, the pentose phosphate cycle, and glycogen synthesis in liver. The chain is Insulin (ins) from Amia calva (Bowfin).